The following is a 23-amino-acid chain: Cytochrome c oxidase subunit 7A-liver, mitochondrial (23 aa).

Belongs to the cytochrome c oxidase VIIa family. In terms of assembly, component of the cytochrome c oxidase (complex IV, CIV), a multisubunit enzyme composed of 14 subunits. The complex is composed of a catalytic core of 3 subunits MT-CO1, MT-CO2 and MT-CO3, encoded in the mitochondrial DNA, and 11 supernumerary subunits COX4I, COX5A, COX5B, COX6A, COX6B, COX6C, COX7A, COX7B, COX7C, COX8 and NDUFA4, which are encoded in the nuclear genome. The complex exists as a monomer or a dimer and forms supercomplexes (SCs) in the inner mitochondrial membrane with NADH-ubiquinone oxidoreductase (complex I, CI) and ubiquinol-cytochrome c oxidoreductase (cytochrome b-c1 complex, complex III, CIII), resulting in different assemblies (supercomplex SCI(1)III(2)IV(1) and megacomplex MCI(2)III(2)IV(2)).

The protein resides in the mitochondrion inner membrane. It functions in the pathway energy metabolism; oxidative phosphorylation. Component of the cytochrome c oxidase, the last enzyme in the mitochondrial electron transport chain which drives oxidative phosphorylation. The respiratory chain contains 3 multisubunit complexes succinate dehydrogenase (complex II, CII), ubiquinol-cytochrome c oxidoreductase (cytochrome b-c1 complex, complex III, CIII) and cytochrome c oxidase (complex IV, CIV), that cooperate to transfer electrons derived from NADH and succinate to molecular oxygen, creating an electrochemical gradient over the inner membrane that drives transmembrane transport and the ATP synthase. Cytochrome c oxidase is the component of the respiratory chain that catalyzes the reduction of oxygen to water. Electrons originating from reduced cytochrome c in the intermembrane space (IMS) are transferred via the dinuclear copper A center (CU(A)) of subunit 2 and heme A of subunit 1 to the active site in subunit 1, a binuclear center (BNC) formed by heme A3 and copper B (CU(B)). The BNC reduces molecular oxygen to 2 water molecules using 4 electrons from cytochrome c in the IMS and 4 protons from the mitochondrial matrix. This is Cytochrome c oxidase subunit 7A-liver, mitochondrial from Oncorhynchus mykiss (Rainbow trout).